A 412-amino-acid chain; its full sequence is Alanyl-tRNA editing protein Aarsd1 (412 aa).

Residues histidine 108, histidine 112, cysteine 208, and histidine 212 each coordinate Zn(2+).

This sequence belongs to the class-II aminoacyl-tRNA synthetase family. Alax-L subfamily. It depends on Zn(2+) as a cofactor.

It localises to the cytoplasm. In terms of biological role, functions in trans to edit the amino acid moiety from incorrectly charged tRNA(Ala). The chain is Alanyl-tRNA editing protein Aarsd1 (aarsd1) from Danio rerio (Zebrafish).